A 277-amino-acid polypeptide reads, in one-letter code: Thymidylate synthase (277 aa).

DUMP is bound at residue Arg21. Position 51 (His51) interacts with (6R)-5,10-methylene-5,6,7,8-tetrahydrofolate. Residue 126 to 127 (RR) participates in dUMP binding. Residue Cys159 is the Nucleophile of the active site. DUMP-binding positions include 179 to 182 (RSAD), Asn190, and 220 to 222 (HLY). A (6R)-5,10-methylene-5,6,7,8-tetrahydrofolate-binding site is contributed by Asp182. Position 276 (Ser276) interacts with (6R)-5,10-methylene-5,6,7,8-tetrahydrofolate.

It belongs to the thymidylate synthase family. Bacterial-type ThyA subfamily. In terms of assembly, homodimer.

The protein localises to the cytoplasm. It catalyses the reaction dUMP + (6R)-5,10-methylene-5,6,7,8-tetrahydrofolate = 7,8-dihydrofolate + dTMP. Its pathway is pyrimidine metabolism; dTTP biosynthesis. Catalyzes the reductive methylation of 2'-deoxyuridine-5'-monophosphate (dUMP) to 2'-deoxythymidine-5'-monophosphate (dTMP) while utilizing 5,10-methylenetetrahydrofolate (mTHF) as the methyl donor and reductant in the reaction, yielding dihydrofolate (DHF) as a by-product. This enzymatic reaction provides an intracellular de novo source of dTMP, an essential precursor for DNA biosynthesis. This chain is Thymidylate synthase, found in Saccharophagus degradans (strain 2-40 / ATCC 43961 / DSM 17024).